We begin with the raw amino-acid sequence, 256 residues long: Ribonuclease HII (256 aa).

In terms of domain architecture, RNase H type-2 spans 72–256; sequence ALICGIDEVG…SFEPIKSMMK (185 aa). Residues Asp78, Glu79, and Asp170 each contribute to the a divalent metal cation site.

Belongs to the RNase HII family. The cofactor is Mn(2+). It depends on Mg(2+) as a cofactor.

The protein resides in the cytoplasm. It carries out the reaction Endonucleolytic cleavage to 5'-phosphomonoester.. In terms of biological role, endonuclease that specifically degrades the RNA of RNA-DNA hybrids. This chain is Ribonuclease HII, found in Staphylococcus epidermidis (strain ATCC 12228 / FDA PCI 1200).